The primary structure comprises 157 residues: UPF0756 membrane protein BH3161 (157 aa).

4 helical membrane-spanning segments follow: residues 1–21 (MISQATIFMLVLLVIALLAKN), 54–74 (LGVTIITIAVLTPIATGEIGF), 87–107 (WVALLSGVVVALIAASGIDLL), and 117–137 (LVLGTILAVAVFNGVAVGPLI).

It belongs to the UPF0756 family.

It is found in the cell membrane. This chain is UPF0756 membrane protein BH3161, found in Halalkalibacterium halodurans (strain ATCC BAA-125 / DSM 18197 / FERM 7344 / JCM 9153 / C-125) (Bacillus halodurans).